A 431-amino-acid chain; its full sequence is Enolase (431 aa).

Gln167 provides a ligand contact to (2R)-2-phosphoglycerate. Glu209 acts as the Proton donor in catalysis. Mg(2+) is bound by residues Asp246, Glu289, and Asp316. The (2R)-2-phosphoglycerate site is built by Lys341, Arg370, Ser371, and Lys392. The active-site Proton acceptor is Lys341.

It belongs to the enolase family. As to quaternary structure, component of the RNA degradosome, a multiprotein complex involved in RNA processing and mRNA degradation. Mg(2+) is required as a cofactor.

The protein localises to the cytoplasm. The protein resides in the secreted. It is found in the cell surface. The enzyme catalyses (2R)-2-phosphoglycerate = phosphoenolpyruvate + H2O. It participates in carbohydrate degradation; glycolysis; pyruvate from D-glyceraldehyde 3-phosphate: step 4/5. In terms of biological role, catalyzes the reversible conversion of 2-phosphoglycerate (2-PG) into phosphoenolpyruvate (PEP). It is essential for the degradation of carbohydrates via glycolysis. This chain is Enolase, found in Shewanella halifaxensis (strain HAW-EB4).